Consider the following 341-residue polypeptide: Elongation factor Ts (341 aa).

An involved in Mg(2+) ion dislocation from EF-Tu region spans residues 80–83 (TDFV).

The protein belongs to the EF-Ts family.

The protein resides in the cytoplasm. Its function is as follows. Associates with the EF-Tu.GDP complex and induces the exchange of GDP to GTP. It remains bound to the aminoacyl-tRNA.EF-Tu.GTP complex up to the GTP hydrolysis stage on the ribosome. The chain is Elongation factor Ts from Lactobacillus acidophilus (strain ATCC 700396 / NCK56 / N2 / NCFM).